We begin with the raw amino-acid sequence, 482 residues long: GDP-D-glucose phosphorylase 1 (482 aa).

Positions 1–21 (MEPFPRILDDRLPRNMRRPRP) are disordered. H255 acts as the Tele-GMP-histidine intermediate in catalysis. The interval 461 to 482 (MPRSPSIRHRSSTRAQSDEGSK) is disordered.

It belongs to the GDPGP1 family. Expressed throughout the neuronal system, in the spermatheca and anterior hypodermal cells.

The protein localises to the cytoplasm. It catalyses the reaction GDP-alpha-D-glucose + phosphate = alpha-D-glucose 1-phosphate + GDP + H(+). In terms of biological role, specific and highly efficient GDP-D-glucose phosphorylase regulating the levels of GDP-D-glucose in cells. The polypeptide is GDP-D-glucose phosphorylase 1 (Caenorhabditis elegans).